Here is a 158-residue protein sequence, read N- to C-terminus: MDLSTADLADREGPSVRSCDVQLRNYGGRAVFSGRIRTVRCFQDNALLKQVLSGPGEGDVLVVDGGGSVHTALIGDLIAELGRSNGWSGVVVHGAVRDSAVLAGMEFGVKALGTNPRKSTKTGEGVLDEVVSFGGVDFVPGEHLVSDTDGIVVVASAD.

Substrate is bound by residues G75–I78 and R97. Position 98 (D98) interacts with a divalent metal cation.

This sequence belongs to the class II aldolase/RraA-like family. Homotrimer. The cofactor is a divalent metal cation.

The enzyme catalyses 4-hydroxy-4-methyl-2-oxoglutarate = 2 pyruvate. It catalyses the reaction oxaloacetate + H(+) = pyruvate + CO2. In terms of biological role, catalyzes the aldol cleavage of 4-hydroxy-4-methyl-2-oxoglutarate (HMG) into 2 molecules of pyruvate. Also contains a secondary oxaloacetate (OAA) decarboxylase activity due to the common pyruvate enolate transition state formed following C-C bond cleavage in the retro-aldol and decarboxylation reactions. The chain is Putative 4-hydroxy-4-methyl-2-oxoglutarate aldolase from Saccharopolyspora erythraea (strain ATCC 11635 / DSM 40517 / JCM 4748 / NBRC 13426 / NCIMB 8594 / NRRL 2338).